The sequence spans 379 residues: MSELSFDAPVWHHGKALRKGYTTGSCATAAAKVAALMVLRQHLIHQVSIVTPSGVTLCLNVESPHIEGQQAIAAIRKDGGDDVDATHGMLIFARVTLNDSGEITLTGGEGIGTVTRKGVGLPLGSAAINRTPRHTIESAVREAIGPARGADVEIFAPEGEARAQKTYNSRLGILGGISIIGTTGIVTPMSEESWKRSLSLELEIKRASGLMRVILVPGNHGERFVREQMGVDTQAVVTMSNFVGYMIEEAVRLGFRQIVLVGHPGKLIKIAAGIFHTHSHIADARMETLVAHLALLGAPLELLTLVGDCDTTEAAMEHIEAYGFGHIYNHLAKRICWRVMQMLRFTKTPPVCDAILFSFDNHILGSNRPVDEIAKELQC.

The protein belongs to the CbiD family.

It catalyses the reaction Co-precorrin-5B + S-adenosyl-L-methionine = Co-precorrin-6A + S-adenosyl-L-homocysteine. It functions in the pathway cofactor biosynthesis; adenosylcobalamin biosynthesis; cob(II)yrinate a,c-diamide from sirohydrochlorin (anaerobic route): step 6/10. In terms of biological role, catalyzes the methylation of C-1 in cobalt-precorrin-5B to form cobalt-precorrin-6A. This Salmonella arizonae (strain ATCC BAA-731 / CDC346-86 / RSK2980) protein is Cobalt-precorrin-5B C(1)-methyltransferase.